Consider the following 407-residue polypeptide: Polygalacturonase (407 aa).

The first 26 residues, 1–26 (MAPHLNIVPSMFVLLLLFISASKVQP), serve as a signal peptide directing secretion. PbH1 repeat units follow at residues 180 to 206 (CKNI…HMGK) and 207 to 228 (SEGV…SIGD). N-linked (GlcNAc...) asparagine glycosylation occurs at Asn-182. Asp-221 acts as the Proton donor in catalysis. The cysteines at positions 223 and 240 are disulfide-linked. The active site involves His-244. PbH1 repeat units follow at residues 260–281 (VEGI…RIKT) and 290–311 (VSEI…LIDQ). 4 N-linked (GlcNAc...) asparagine glycosylation sites follow: Asn-267, Asn-272, Asn-302, and Asn-331. 2 cysteine pairs are disulfide-bonded: Cys-351-Cys-357 and Cys-379-Cys-395. A PbH1 5 repeat occupies 357–384 (CQNVELADIDIQHNGAEPATSQCLNVKP).

It belongs to the glycosyl hydrolase 28 family. In terms of tissue distribution, pollen.

It localises to the secreted. Its subcellular location is the cell wall. The enzyme catalyses (1,4-alpha-D-galacturonosyl)n+m + H2O = (1,4-alpha-D-galacturonosyl)n + (1,4-alpha-D-galacturonosyl)m.. Its function is as follows. May function in the depolymerization of the pectin in its walls during pollen tube elongation, or in that of the pistil during pollination. The chain is Polygalacturonase (G9) from Gossypium barbadense (Sea Island cotton).